Consider the following 346-residue polypeptide: FMRFamide-related peptides type HF-1 (346 aa).

Positions 1–19 are cleaved as a signal peptide; the sequence is MTSLCLTIAPAVLSLICLS. The propeptide occupies 20–45; the sequence is SYGWAEDNNGIHTLDDGDNDPFFRHN. F51 bears the Phenylalanine amide mark. Positions 54 to 94 are excised as a propeptide; it reads AFVPLWDNADDSLVRKNLLTHWSEFPLSPALSSSDVFSRNS. At F100 the chain carries Phenylalanine amide. A propeptide spanning residues 103-109 is cleaved from the precursor; sequence SYPPYQD. Phenylalanine amide is present on F115. A propeptide spanning residues 118-203 is cleaved from the precursor; that stretch reads SHQPDIDEYL…EILSNEDDLE (86 aa). A disordered region spans residues 137 to 185; sequence YRKRRSEDGDSKEDGLNRVARSADANQQSKNTQSNKFGKDLQKRETKKE. Residues 141–152 are compositionally biased toward basic and acidic residues; it reads RSEDGDSKEDGL. Residues 160-172 are compositionally biased toward polar residues; sequence DANQQSKNTQSNK. Residues 173–185 show a composition bias toward basic and acidic residues; sequence FGKDLQKRETKKE. 2 positions are modified to phenylalanine amide: F209 and F216. The propeptide occupies 219-226; it reads GDEDESYD. F232 is modified (phenylalanine amide). Residues 235-243 constitute a propeptide that is removed on maturation; that stretch reads SLRHDQEFE. Residues F249 and F256 each carry the phenylalanine amide modification. Residues 259–267 constitute a propeptide that is removed on maturation; it reads GDEDDAREE. Residue F273 is modified to Phenylalanine amide. Residues 276-283 constitute a propeptide that is removed on maturation; that stretch reads SSNEDEDI. The residue at position 290 (F290) is a Phenylalanine amide. Positions 293–301 are excised as a propeptide; the sequence is SGNEDGDVD. A phenylalanine amide mark is found at F307 and F314. Positions 317–325 are excised as a propeptide; it reads SEKEDGDVD. A phenylalanine amide mark is found at F331 and F338. The propeptide occupies 341–346; it reads GDSETS.

This sequence belongs to the FARP (FMRFamide related peptide) family. As to expression, central nervous system.

It is found in the secreted. Its function is as follows. Can function as both cardioregulatory hormones and transmitters and may regulate cardiovascular function. This Cornu aspersum (Brown garden snail) protein is FMRFamide-related peptides type HF-1.